A 664-amino-acid chain; its full sequence is Degenerin del-1 (664 aa).

Residues methionine 1–arginine 67 lie on the Cytoplasmic side of the membrane. The helical transmembrane segment at phenylalanine 68–valine 88 threads the bilayer. At lysine 89–glycine 607 the chain is on the extracellular side. Residues asparagine 241, asparagine 300, asparagine 394, asparagine 508, and asparagine 562 are each glycosylated (N-linked (GlcNAc...) asparagine). A helical membrane pass occupies residues glutamine 608–valine 628. The Cytoplasmic segment spans residues arginine 629 to asparagine 664.

The protein belongs to the amiloride-sensitive sodium channel (TC 1.A.6) family.

It localises to the membrane. Functionally, probable sodium channel subunit. In Caenorhabditis elegans, this protein is Degenerin del-1 (del-1).